The chain runs to 300 residues: GTPase Era (300 aa).

Positions K4–K173 constitute an Era-type G domain. The interval G12–S19 is G1. G12 to S19 is a GTP binding site. Residues Q38–N42 are G2. A G3 region spans residues D59–G62. GTP contacts are provided by residues D59–F63 and S122–E125. Residues S122–E125 form a G4 region. The G5 stretch occupies residues I152–A154. Residues L204 to N282 enclose the KH type-2 domain.

This sequence belongs to the TRAFAC class TrmE-Era-EngA-EngB-Septin-like GTPase superfamily. Era GTPase family. Monomer.

The protein resides in the cytoplasm. It is found in the cell membrane. Its function is as follows. An essential GTPase that binds both GDP and GTP, with rapid nucleotide exchange. Plays a role in 16S rRNA processing and 30S ribosomal subunit biogenesis and possibly also in cell cycle regulation and energy metabolism. This chain is GTPase Era, found in Ureaplasma parvum serovar 3 (strain ATCC 27815 / 27 / NCTC 11736).